Consider the following 487-residue polypeptide: MSHSPTPLAAIVLAAGKGTRMKSQKAKVLHEVGGRPLAWFPTRRALEIGANPVVAVVGHQAEAVEAALAATLPGAPLRFAVQREQLGTAHAVLSAREALGRYQGAVLILSGDTPLLRAETLSRVVAARAGATLSLATMRLADPHGYGRIVRDPAGTPARVVEEKDATDAERALDEVNAGLYCADAAFLWEALSKVGSANAQREFYLTDLVAMAARAGGVVAVPVPPEEASGVNDREELARAGRVLLRRRASELMRSGVTIEDPERFDCDEGVEIGADAVIEPNVRLKGRTRIGAGCRLGAGAILTDAVLADGVTVKPYTVIEEATVAARAILGPFSRLRPGSDIGEEAHVGNFVETKKARLGKGAKANHLTYLGDATIGAGANVGAGTITCNYDGEKKHPTTIGEGAFIGSDSILVAPIEIGAGAYVAAGSTLTESVPPGALALGRAKQVTKEGWVARRKAEAQNKGAAEAAPAPSPADSPRGGRAS.

The segment at 1-235 (MSHSPTPLAA…PEEASGVNDR (235 aa)) is pyrophosphorylase. Residues 13–16 (LAAG), Lys27, Gln82, 87–88 (GT), 110–112 (SGD), Gly147, Glu162, Asn177, and Asn233 contribute to the UDP-N-acetyl-alpha-D-glucosamine site. Asp112 serves as a coordination point for Mg(2+). Asn233 is a binding site for Mg(2+). The interval 236–256 (EELARAGRVLLRRRASELMRS) is linker. The N-acetyltransferase stretch occupies residues 257-487 (GVTIEDPERF…ADSPRGGRAS (231 aa)). UDP-N-acetyl-alpha-D-glucosamine contacts are provided by Arg339 and Lys357. His369 functions as the Proton acceptor in the catalytic mechanism. The UDP-N-acetyl-alpha-D-glucosamine site is built by Tyr372 and Asn383. Acetyl-CoA is bound by residues Ala386, 392–393 (NY), Ser411, Ala429, and Arg446. A disordered region spans residues 453 to 487 (EGWVARRKAEAQNKGAAEAAPAPSPADSPRGGRAS). Positions 468-481 (AAEAAPAPSPADSP) are enriched in low complexity.

This sequence in the N-terminal section; belongs to the N-acetylglucosamine-1-phosphate uridyltransferase family. In the C-terminal section; belongs to the transferase hexapeptide repeat family. As to quaternary structure, homotrimer. Requires Mg(2+) as cofactor.

It localises to the cytoplasm. The catalysed reaction is alpha-D-glucosamine 1-phosphate + acetyl-CoA = N-acetyl-alpha-D-glucosamine 1-phosphate + CoA + H(+). It carries out the reaction N-acetyl-alpha-D-glucosamine 1-phosphate + UTP + H(+) = UDP-N-acetyl-alpha-D-glucosamine + diphosphate. It functions in the pathway nucleotide-sugar biosynthesis; UDP-N-acetyl-alpha-D-glucosamine biosynthesis; N-acetyl-alpha-D-glucosamine 1-phosphate from alpha-D-glucosamine 6-phosphate (route II): step 2/2. The protein operates within nucleotide-sugar biosynthesis; UDP-N-acetyl-alpha-D-glucosamine biosynthesis; UDP-N-acetyl-alpha-D-glucosamine from N-acetyl-alpha-D-glucosamine 1-phosphate: step 1/1. It participates in bacterial outer membrane biogenesis; LPS lipid A biosynthesis. In terms of biological role, catalyzes the last two sequential reactions in the de novo biosynthetic pathway for UDP-N-acetylglucosamine (UDP-GlcNAc). The C-terminal domain catalyzes the transfer of acetyl group from acetyl coenzyme A to glucosamine-1-phosphate (GlcN-1-P) to produce N-acetylglucosamine-1-phosphate (GlcNAc-1-P), which is converted into UDP-GlcNAc by the transfer of uridine 5-monophosphate (from uridine 5-triphosphate), a reaction catalyzed by the N-terminal domain. In Anaeromyxobacter sp. (strain Fw109-5), this protein is Bifunctional protein GlmU.